Consider the following 1066-residue polypeptide: DNA primase (1066 aa).

A disordered region spans residues 694–727 (DGPSAGGDDGDGDWFPDAGGPGDEEWEEDTDPMD). Residues 715-725 (GDEEWEEDTDP) show a composition bias toward acidic residues. The CHC2-type zinc-finger motif lies at 995–1035 (CLRFKHGRASRATARTFLALSVGTNNRLCASLCQQCFATKC).

The protein belongs to the herpesviridae DNA primase family. Associates with the helicase and the primase-associated factor to form the helicase-primase factor.

The protein resides in the host nucleus. Its function is as follows. Essential component of the helicase/primase complex. Unwinds the DNA at the replication forks and generates single-stranded DNA for both leading and lagging strand synthesis. The primase initiates primer synthesis and thereby produces large amount of short RNA primers on the lagging strand that the polymerase elongates using dNTPs. This Human herpesvirus 2 (strain HG52) (HHV-2) protein is DNA primase.